A 969-amino-acid chain; its full sequence is MTKETRQGEQNRPSYKESLNLLKTSFGMRANATLREPELQNFWADKGIDLELGLANKGPSFTLHDGPPYANGALHMGHALNKVLKDIINKFHIMRGHKVHFVPGWDCHGLPIELKVLQTLSNKERQALTPIQLRKKAAAYASKQVKGQMEGFKRWGIWGNWNKPYLTLQKEYESAQVKLFGQMVLKGYIYRGLKPVHWSPSSRTALAEAELEYPEAHTSPSVYVAFSVIHLPQSLSENLIKQGLELPGDEVELSKRLKVCIWTTTPWTLPANAAVSVNSNLDYSFVRHEEKGQILIFATELLEEVSEILGISFKQVANAKGESLKGILYKHPLYERTAPIVLGGSYITTQSGTGLVHTAPGHGIDDFKTGLQNNLEVFCPVDEKGIFTSEAGKFEGLNVLKDANKEIISSLEISGSLLKELPYVHKYPYDWRTKKPTIFRATEQWFASVEGFREDALKAIDDVEWLPESGRNRIQSMVRERGDWCISRQRTWGIPIPVFYKKNTNEILLNKETIDHIENLFAQYGADIWWEFDESKLLPPSLASESHHWQKGVDTMDVWFDSGSSWASVSCQRDELGYPADLYLEGTDQHRGWFQSSLLTSVAVNGHAPYKKVLTHGFALDENGRKMSKSLGNIIDPTVIINGGTNKKTDPAYGADVLRLWVSSVDYSVDVPIGSNILKQLSDVYRKVRNTSRYLLGNLHDFDPKKNSVDIDNLPILDKWMLNRTAEVIDEITLAFEKYEFSRFFQLLQSFCTVDLSNFYLDIAKDRLYVSAPDDPRRRACQTVMALIIEKLAGLISPVLCHMAEDIWQNIPYQLSEESVFKRGWPVSPSNWKRASLTEPISLIRELRTSVNRVLEGCRNRQELGSSLEAGLRLEITNQGLLDAIDFLAKNGDHDVDCIRDWFLVSQLQIGGEPWAEVLISQQFELGVIEISNARGYKCERCWHYEQDIGSCSEHPTLCGRCVTVMNRL.

A 'HIGH' region motif is present at residues 68–78 (PYANGALHMGH). Residue glutamate 585 coordinates L-isoleucyl-5'-AMP. Residues 626-630 (KMSKS) carry the 'KMSKS' region motif. Lysine 629 is a binding site for ATP. Residues cysteine 939, cysteine 942, cysteine 959, and cysteine 962 each coordinate Zn(2+).

Belongs to the class-I aminoacyl-tRNA synthetase family. IleS type 1 subfamily. In terms of assembly, monomer. Zn(2+) serves as cofactor.

The protein resides in the cytoplasm. The catalysed reaction is tRNA(Ile) + L-isoleucine + ATP = L-isoleucyl-tRNA(Ile) + AMP + diphosphate. Functionally, catalyzes the attachment of isoleucine to tRNA(Ile). As IleRS can inadvertently accommodate and process structurally similar amino acids such as valine, to avoid such errors it has two additional distinct tRNA(Ile)-dependent editing activities. One activity is designated as 'pretransfer' editing and involves the hydrolysis of activated Val-AMP. The other activity is designated 'posttransfer' editing and involves deacylation of mischarged Val-tRNA(Ile). This chain is Isoleucine--tRNA ligase, found in Prochlorococcus marinus (strain MIT 9211).